Here is a 116-residue protein sequence, read N- to C-terminus: uncharacterized protein (116 aa).

3 helical membrane passes run A5–C27, P42–V64, and V88–I110.

It localises to the cell membrane. This is an uncharacterized protein from Archaeoglobus fulgidus (strain ATCC 49558 / DSM 4304 / JCM 9628 / NBRC 100126 / VC-16).